A 392-amino-acid chain; its full sequence is MKKYHISMINIPAYGHVNPTLALVEKLCEKGHRVTYATTEEFAPAVQQAGGEALIYHTSLNIDPKQIREMMEKNDAPLSLLKESLSILPQLEELYKDDQPDLIIYDFVALAGKLFAEKLNVPVIKLCSSYAQNESFQLGNEDMLKKIREAEAEFKAYLEQEKLPAVSFEQLAVPEALNIVFMPKSFQIQHETFDDRFCFVGPSLGERKEKESLLIDKDDRPLMLISLGTAFNAWPEFYKMCIKAFRDSSWQVIMSVGKTIDPESLEDIPANFTIRQSVPQLEVLEKADLFISHGGMNSTMEAMNAGVPLVVIPQMYEQELTANRVDELGLGVYLPKEEVTVSSLQEAVQAVSSDQELLSRVKNMQKDVKEAGGAERAAAEIEAFMKKSAVPQ.

UDP-binding positions include Asn18, Thr229, Ser255, Val278, His293, and 297-301 (NSTME).

This sequence belongs to the UDP-glycosyltransferase family. As to quaternary structure, monomer.

The enzyme catalyses an NDP-glycose + an acceptor = a glycosylated acceptor + NDP.. Activity is improved in the presence of Mn(2+), Mg(2+) and Ca(2+), and inhibited by Ni(2+), Zn(2+) and Cu(2+). Functionally, glycosyltransferase that can glycosylate a wide range of substrates, including various flavonoids, phenyl ketones, curcuminoid, lignins, zingerone, triterpenes, stilbene and anthraquinone, using UDP-glucose or ADP-glucose as sugar donor. It also exhibits O-, N- and S-glycosylation activities towards simple aromatics. In vivo, the broad acceptor tolerance of YjiC might function as a detoxification agent against exogenous xenobiotics to make the strain adaptable to the changeable environment. The protein is NDP-glycosyltransferase YjiC (yjiC) of Bacillus subtilis (strain 168).